The sequence spans 108 residues: Protein YcgL (108 aa).

The region spanning 12–96 (MFCVIYRSSK…PPEDLLKQHL (85 aa)) is the YcgL domain.

The chain is Protein YcgL from Escherichia coli O127:H6 (strain E2348/69 / EPEC).